We begin with the raw amino-acid sequence, 63 residues long: Cytochrome c oxidase subunit 5C (63 aa).

The chain crosses the membrane as a helical span at residues 16-34 (VVKEICIGLTLGLVAGGLW).

It belongs to the cytochrome c oxidase subunit 5C family.

Its subcellular location is the mitochondrion inner membrane. In terms of biological role, this protein is one of the nuclear-coded polypeptide chains of cytochrome c oxidase, the terminal oxidase in mitochondrial electron transport. The chain is Cytochrome c oxidase subunit 5C (COX5C) from Oryza sativa subsp. japonica (Rice).